The primary structure comprises 220 residues: Dual specificity phosphatase 29 (220 aa).

Residues 54-202 (HVNEVWPKLY…LRELDKQLVQ (149 aa)) enclose the Tyrosine-protein phosphatase domain. 146-153 (HCVMGRSR) lines the substrate pocket. Cysteine 147 functions as the Phosphocysteine intermediate in the catalytic mechanism.

The protein belongs to the protein-tyrosine phosphatase family. Non-receptor class dual specificity subfamily. In terms of assembly, homodimer. Interacts with PRKAA2.

Its subcellular location is the cytoplasm. The protein localises to the nucleus. The catalysed reaction is O-phospho-L-tyrosyl-[protein] + H2O = L-tyrosyl-[protein] + phosphate. It catalyses the reaction O-phospho-L-seryl-[protein] + H2O = L-seryl-[protein] + phosphate. It carries out the reaction O-phospho-L-threonyl-[protein] + H2O = L-threonyl-[protein] + phosphate. Functionally, dual specificity phosphatase able to dephosphorylate phosphotyrosine, phosphoserine and phosphothreonine residues within the same substrate, with a preference for phosphotyrosine as a substrate. Involved in the modulation of intracellular signaling cascades. In skeletal muscle regulates systemic glucose homeostasis by activating, AMPK, an energy sensor protein kinase. Affects MAP kinase signaling though modulation of the ERK1/2 cascade in skeletal muscle promoting muscle cell differentiation, development and atrophy. This chain is Dual specificity phosphatase 29 (DUSP29), found in Pan troglodytes (Chimpanzee).